The primary structure comprises 179 residues: CASP-like protein 1F1 (179 aa).

Over 1–16 the chain is Cytoplasmic; sequence MENVEDKYNSPLKSQK. The helical transmembrane segment at 17 to 37 threads the bilayer; sequence LFIGAQICLRIVTIGATLAAT. The Extracellular segment spans residues 38 to 65; sequence WIMVTDKQSITFGDFVMVAKYNYSSAFK. Residue asparagine 59 is glycosylated (N-linked (GlcNAc...) asparagine). The helical transmembrane segment at 66 to 86 threads the bilayer; that stretch reads FFVLANVIACACSVVSLLFLC. Residues 87–105 are Cytoplasmic-facing; it reads ALGRYSSNPGHVFLLFLHD. A helical membrane pass occupies residues 106–126; it reads LLMMSLVLAGCSAATAIGFLG. Topologically, residues 127–150 are extracellular; the sequence is KYGNTKSGWMPICDQFGQFCNRGT. A helical membrane pass occupies residues 151–171; sequence ISMMLSYLSMVCLLILTVTSA. Residues 172–179 lie on the Cytoplasmic side of the membrane; the sequence is NKSRQIHV.

It belongs to the Casparian strip membrane proteins (CASP) family. In terms of assembly, homodimer and heterodimers.

The protein localises to the cell membrane. This Ricinus communis (Castor bean) protein is CASP-like protein 1F1.